The primary structure comprises 302 residues: Homoserine O-acetyltransferase (302 aa).

The active-site Acyl-thioester intermediate is Cys-142. The substrate site is built by Lys-163 and Ser-192. His-235 functions as the Proton acceptor in the catalytic mechanism. The active site involves Glu-237. Arg-249 serves as a coordination point for substrate.

The protein belongs to the MetA family.

The protein localises to the cytoplasm. It catalyses the reaction L-homoserine + acetyl-CoA = O-acetyl-L-homoserine + CoA. It functions in the pathway amino-acid biosynthesis; L-methionine biosynthesis via de novo pathway; O-acetyl-L-homoserine from L-homoserine: step 1/1. Functionally, transfers an acetyl group from acetyl-CoA to L-homoserine, forming acetyl-L-homoserine. In Bacillus pumilus (strain SAFR-032), this protein is Homoserine O-acetyltransferase.